We begin with the raw amino-acid sequence, 778 residues long: Probable dipeptidyl peptidase 4 (778 aa).

The first 18 residues, 1 to 18, serve as a signal peptide directing secretion; that stretch reads MKTSQFLSLLLLAGIAQA. 3 N-linked (GlcNAc...) asparagine glycosylation sites follow: asparagine 84, asparagine 114, and asparagine 222. Active-site charge relay system residues include serine 616, aspartate 693, and histidine 728.

The protein belongs to the peptidase S9B family.

The protein localises to the secreted. The enzyme catalyses Release of an N-terminal dipeptide, Xaa-Yaa-|-Zaa-, from a polypeptide, preferentially when Yaa is Pro, provided Zaa is neither Pro nor hydroxyproline.. Functionally, extracellular dipeptidyl-peptidase which removes N-terminal dipeptides sequentially from polypeptides having unsubstituted N-termini provided that the penultimate residue is proline. Contributes to pathogenicity. The chain is Probable dipeptidyl peptidase 4 (DPP4) from Arthroderma benhamiae (strain ATCC MYA-4681 / CBS 112371) (Trichophyton mentagrophytes).